We begin with the raw amino-acid sequence, 661 residues long: ATP-dependent RNA helicase vasa (661 aa).

A compositionally biased stretch (acidic residues) spans 1–10 (MSDDWDDEPI). The interval 1-186 (MSDDWDDEPI…RRRRNEDDIN (186 aa)) is disordered. At S22 the chain carries Phosphoserine. A Phosphothreonine modification is found at T27. Composition is skewed to gly residues over residues 38–52 (DGVGGSGGEGGGYQG) and 60–83 (RIGGGRGGGAGGYRGGNRDGGGFH). Residues 85–95 (GRREGERDFRG) are compositionally biased toward basic and acidic residues. 5 tandem repeats follow at residues 93–99 (FRGGEGG), 100–106 (FRGGQGG), 107–113 (SRGGQGG), 114–120 (SRGGQGG), and 121–127 (FRGGEGG). The tract at residues 93-127 (FRGGEGGFRGGQGGSRGGQGGSRGGQGGFRGGEGG) is 5 X 7 AA tandem repeats of [FS]-R-G-G-[EQ]-G-G. The span at 96 to 129 (GEGGFRGGQGGSRGGQGGSRGGQGGFRGGEGGFR) shows a compositional bias: gly residues. Positions 131–172 (RLYENEDGDERRGRLDREERGGERRGRLDREERGGERGERGD) are enriched in basic and acidic residues. The B30.2/SPRY domain-binding motif signature appears at 184-188 (DINNN). The tract at residues 184–203 (DINNNNNIVEDVERKREFYI) is required for posterior localization in oocyte. A Q motif motif is present at residues 245–273 (QHFTSADLRDIIIDNVNKSGYKIPTPIQK). In terms of domain architecture, Helicase ATP-binding spans 276–453 (IPVISSGRDL…GEFLKNYVFV (178 aa)). 289 to 296 (AQTGSGKT) serves as a coordination point for ATP. The short motif at 399–402 (DEAD) is the DEAD box element. Residues 477–624 (KRSKLIEILS…TVPDFLRTCG (148 aa)) form the Helicase C-terminal domain.

Belongs to the DEAD box helicase family. DDX4/VASA subfamily. As to quaternary structure, interacts with eIF5B and faf. Interacts with gus (via B30.2/SPRY domain) and Fsn (via B30.2/SPRY domain). Interacts with aub, me31B, eIF-4a and TER94. Interacts with piwi; this interaction is RNA independent. Interacts with Dcr-1 and Fmr1; these interactions occur in the polar granules. The cofactor is Mg(2+). In terms of processing, ubiquitinated during oogenesis. Deubiquitinated by faf, which protects this protein from proteasome-mediated degradation. In terms of tissue distribution, abundantly expressed in the female germline. Gus and faf are required for vas expression in the posterior pole of the oocyte.

The protein localises to the cytoplasm. The protein resides in the perinuclear region. Its subcellular location is the cytoplasmic ribonucleoprotein granule. It catalyses the reaction ATP + H2O = ADP + phosphate + H(+). In terms of biological role, involved in translational control mechanisms operating in early stages of oogenesis. Required maternally in many stages of oogenesis, including cystocyte differentiation, oocyte differentiation, and specification of anterior-posterior polarity in the developing cysts. Essential for the formation and/or structural integrity of perinuclear nuage particles during germ cell formation. Required for gus, Fsn and aub accumulation at the posterior pole of the embryo. Required for the localization of vas to the perinuclear region of nurse cells. May have a role in production of piwi-interacting RNA (piRNA). The sequence is that of ATP-dependent RNA helicase vasa from Drosophila melanogaster (Fruit fly).